The sequence spans 528 residues: Zinc finger protein 16-like (528 aa).

The tract at residues 1–28 (MSRKRNHCYMETGASSESQGAFVDSAGP) is disordered. Residues 79–106 (IRVLKMELREKSDEIELLKAKLESAEKD) adopt a coiled-coil conformation. Disordered regions lie at residues 159–202 (GAAE…TDAE) and 232–293 (FKGD…DRME). Over residues 232 to 242 (FKGDSETKCED) the composition is skewed to basic and acidic residues. Acidic residues predominate over residues 244–256 (PPMDEEDENEDSE). Basic and acidic residues-rich tracts occupy residues 257–270 (EGRG…DHFP) and 278–293 (GEDR…DRME). The C2H2-type 1 zinc-finger motif lies at 303–326 (FICPFCGTLCPDSSFLEEHIKLMH). A compositionally biased stretch (low complexity) spans 333 to 345 (QSTSAGSSSQAEG). The disordered stretch occupies residues 333–359 (QSTSAGSSSQAEGDSGEAGPASRGARE). 4 consecutive C2H2-type zinc fingers follow at residues 366–388 (YECG…QRIH), 394–416 (FVCP…RLSH), 423–445 (FPCP…QRVH), and 451–473 (YACP…MRIH). The segment at 479-501 (YTCYQCGRSFRHLGTYKSHRCMP) adopts a C2H2-type 6; degenerate zinc-finger fold. The interval 502–528 (ATQMPSEHSPPWAQEDKVQTGRLQGYV) is disordered.

Belongs to the krueppel C2H2-type zinc-finger protein family.

The protein resides in the nucleus. Functionally, probable transcription factor. Important for development and migration of oligodendrocyte precursor cells, and normal myelination of axons in the central nervous system (CNS). Functions autonomously in oligodendrocytes to promote CNS myelination. Seems to act in parallel with notch3 during oligodendrocyte development. The chain is Zinc finger protein 16-like from Danio rerio (Zebrafish).